The primary structure comprises 354 residues: DNA polymerase IV (354 aa).

The region spanning 8-189 is the UmuC domain; the sequence is IIHIDMDCFY…LPLQKIPGVG (182 aa). Mg(2+)-binding residues include Asp-12 and Asp-107. The active site involves Glu-108.

The protein belongs to the DNA polymerase type-Y family. As to quaternary structure, monomer. It depends on Mg(2+) as a cofactor.

It is found in the cytoplasm. It carries out the reaction DNA(n) + a 2'-deoxyribonucleoside 5'-triphosphate = DNA(n+1) + diphosphate. Functionally, poorly processive, error-prone DNA polymerase involved in untargeted mutagenesis. Copies undamaged DNA at stalled replication forks, which arise in vivo from mismatched or misaligned primer ends. These misaligned primers can be extended by PolIV. Exhibits no 3'-5' exonuclease (proofreading) activity. May be involved in translesional synthesis, in conjunction with the beta clamp from PolIII. This chain is DNA polymerase IV, found in Vibrio vulnificus (strain CMCP6).